The chain runs to 569 residues: Proton-coupled zinc antiporter SLC30A9, mitochondrial (569 aa).

A mitochondrion-targeting transit peptide spans 1–68; it reads MLPGLAAAAA…IGTLSQVKLY (68 aa). A run of 5 helical transmembrane segments spans residues 240–260, 315–335, 343–363, 393–413, and 425–445; these read VVMVAICINGLNCFFKFLAWI, GVGIFMMGAGLSWYHGVMGLL, LLWAYCILAGSLVSEGATLLV, VILLEDTAAVLGVIIAATCMG, and SLGSLGVGTLLGMVSAFLIYT. An LXXLL motif motif is present at residues 463–467; sequence LTELL.

It belongs to the cation diffusion facilitator (CDF) transporter (TC 2.A.4) family. SLC30A subfamily. As to quaternary structure, interacts with GRIP1, ESR1, AR and CTNNB1.

Its subcellular location is the mitochondrion membrane. The protein localises to the nucleus. It localises to the endoplasmic reticulum. It catalyses the reaction Zn(2+)(in) + 2 H(+)(out) = Zn(2+)(out) + 2 H(+)(in). Its function is as follows. Mitochondrial proton-coupled zinc ion antiporter mediating the export of zinc from the mitochondria and involved in zinc homeostasis, zinc mobilization as well as mitochondrial morphology and health. In nucleus, functions as a secondary coactivator for nuclear receptors by cooperating with p160 coactivators subtypes. Plays a role in transcriptional activation of Wnt-responsive genes. The sequence is that of Proton-coupled zinc antiporter SLC30A9, mitochondrial (SLC30A9) from Pongo abelii (Sumatran orangutan).